Here is a 324-residue protein sequence, read N- to C-terminus: MAHQIELTQTVKDSQLGQRLDQAVAELFTDFSRSRLKEWLLEGKIAVNGDVITKPRTKVMGGEVITVQAELEDEQRWEAQDLPLNIVYEDDDIIVINKPRDFVVHPGAGQADKTVLNALLFHYSPIAEVPRAGIVHRLDKDTTGLMVVAKTVPAQTRLVRALQKRDVTREYEAIVIGTMTAGGMIDKPIGRHSTKRTLMSVSPMGKHAVTHYRVAEHFREHTRLRLRLETGRTHQIRVHMAYLQHPLLGDTAYGGRARIPKGATEELTEMIRDFDRQALHAVMLKFEHPVTGEELEFHAPVPDDMVEMTLALREDAKLNRTEEY.

One can recognise an S4 RNA-binding domain in the interval 18 to 91; it reads QRLDQAVAEL…LPLNIVYEDD (74 aa). The active site involves aspartate 139.

The protein belongs to the pseudouridine synthase RluA family.

The protein localises to the cytoplasm. The enzyme catalyses uridine(1911/1915/1917) in 23S rRNA = pseudouridine(1911/1915/1917) in 23S rRNA. Responsible for synthesis of pseudouridine from uracil at positions 1911, 1915 and 1917 in 23S ribosomal RNA. This chain is Ribosomal large subunit pseudouridine synthase D (rluD), found in Vibrio cholerae serotype O1 (strain ATCC 39315 / El Tor Inaba N16961).